The following is a 1353-amino-acid chain: Adenylate cyclase type 9 (1353 aa).

Disordered stretches follow at residues 1–27 (MASP…DSNS) and 49–71 (SISS…GGGG). Over 1–117 (MASPPHQQLL…CFPQTQRRFR (117 aa)) the chain is Cytoplasmic. Positions 16-27 (EVSCDSSGDSNS) are enriched in polar residues. Residues 49-66 (SISSSCSSSGDSGGVPRR) show a composition bias toward low complexity. Residues 118 to 138 (YALFYIGFACLLWSIYFAVHM) traverse the membrane as a helical segment. Over 139-141 (RSR) the chain is Extracellular. A helical transmembrane segment spans residues 142–162 (LIVMVAPALCFLLVCVGFFLF). Residues 163–171 (TFTKLYARH) are Cytoplasmic-facing. A helical transmembrane segment spans residues 172 to 192 (YAWTSLALTLLVFALTLAAQF). The Extracellular segment spans residues 193-215 (QVLTPVSGRGDSSNLTATARPTD). The N-linked (GlcNAc...) asparagine glycan is linked to asparagine 206. Residues 216–235 (TCLSQVGSFSMCIEVLFLLY) form a helical membrane-spanning segment. The Cytoplasmic portion of the chain corresponds to 236 to 241 (TVMHLP). Residues 242–259 (LYLSLCLGVAYSVLFETF) form a helical membrane-spanning segment. Residues 260 to 280 (GYHFRDEACFPSPGAGALHWE) lie on the Extracellular side of the membrane. A helical transmembrane segment spans residues 281–301 (LLSRGLLHGCIHAIGVHLFVM). The Cytoplasmic segment spans residues 302 to 786 (SQVRSRSTFL…VKTFASPTFS (485 aa)). The disordered stretch occupies residues 349–375 (QGDEESENSVKRHATSSPKNRKKKSSI). Residues 359-374 (KRHATSSPKNRKKKSS) show a composition bias toward basic residues. Residues 394-521 (SILFADIVGF…NDVNLANLME (128 aa)) form the Guanylate cyclase 1 domain. Aspartate 399, isoleucine 400, and aspartate 443 together coordinate Mg(2+). ATP contacts are provided by residues 399-404 (DIVGFT), 441-443 (LGD), and arginine 487. Serine 610 carries the phosphoserine modification. The interval 642–684 (EAGAEGGAPQNGCQDEHKNSTKASGGPNPKTQNGLLSPPQEEK) is disordered. A phosphoserine mark is found at serine 688, serine 691, and serine 706. Residues 787-807 (SLLDVFLSTTVFLTLSTTCFL) traverse the membrane as a helical segment. Over 808–818 (KYEAATVPPPP) the chain is Extracellular. A helical transmembrane segment spans residues 819-839 (AALAVFSAALLLEVLSLAVSI). The Cytoplasmic segment spans residues 840–867 (RMVFFLEDVMACTKRLLEWIAGWLPRHC). A helical membrane pass occupies residues 868–888 (IGAILVSLPALAVYSHVTSEY). At 889–891 (ETN) the chain is on the extracellular side. A helical membrane pass occupies residues 892–912 (IHFPVFTGSAALIAVVHYCNF). Residues 913–920 (CQLSSWMR) lie on the Cytoplasmic side of the membrane. The chain crosses the membrane as a helical span at residues 921 to 941 (SSLATVVGAGPLLLLYVSLCP). Topologically, residues 942–975 (DSSVLTSPLDAVQNFSSERNPCNSSVPRDLRRPA) are extracellular. 2 N-linked (GlcNAc...) asparagine glycosylation sites follow: asparagine 955 and asparagine 964. Residues 976 to 996 (SLIGQEVVLVFFLLLLLVWFL) form a helical membrane-spanning segment. Residues 997–1353 (NREFEVSYRL…LTKLNVSKSV (357 aa)) are Cytoplasmic-facing. Positions 1058 to 1198 (GVIFASIVNF…DTVNIASRMD (141 aa)) constitute a Guanylate cyclase 2 domain. Residues lysine 1108, 1185 to 1187 (DIW), 1192 to 1196 (NIASR), and lysine 1232 each bind ATP. Phosphoserine occurs at positions 1257, 1259, 1295, and 1307. Positions 1292–1301 (SLGSDSSTQA) are enriched in polar residues. A disordered region spans residues 1292–1326 (SLGSDSSTQAKDAHLSPKRPWKEPVKAEERGRFGK). Residues 1302-1326 (KDAHLSPKRPWKEPVKAEERGRFGK) show a composition bias toward basic and acidic residues.

The protein belongs to the adenylyl cyclase class-4/guanylyl cyclase family. Mg(2+) serves as cofactor. Mn(2+) is required as a cofactor. As to expression, detected in skeletal muscle, pancreas, lung, heart, kidney, liver, brain and placenta. Expressed in multiple cells of the lung, with expression highest in airway smooth muscle.

The protein localises to the cell membrane. The enzyme catalyses ATP = 3',5'-cyclic AMP + diphosphate. Insensitive to calcium/calmodulin, forskolin and somatostatin. Stimulated by beta-adrenergic receptor activation. Activity is down-regulated by calcium/calcineurin. Adenylyl cyclase that catalyzes the formation of the signaling molecule cAMP in response to activation of G protein-coupled receptors. Contributes to signaling cascades activated by CRH (corticotropin-releasing factor), corticosteroids and beta-adrenergic receptors. In Homo sapiens (Human), this protein is Adenylate cyclase type 9 (ADCY9).